We begin with the raw amino-acid sequence, 734 residues long: Paralemmin-3 (734 aa).

Residues 19-64 (SALYRQRLEVIAEKRRLQEEIGAARRELEEEKLRVERLKRKSLRER) are a coiled coil. Disordered stretches follow at residues 62–100 (RERW…RNLE) and 114–217 (QSAS…LGVS). Residues 73–82 (GPERPEEPAS) are compositionally biased toward basic and acidic residues. Positions 90–116 (GQAQARIRNLEDSLFSLQSQLQLLQSA) form a coiled coil. Phosphoserine is present on residues Ser139, Ser158, Ser167, Ser170, and Ser172. A compositionally biased stretch (polar residues) spans 186–198 (RPSTEAIGTSSEA). Ser270 carries the phosphoserine modification. The span at 297-308 (DVTGESGRDAEA) shows a compositional bias: basic and acidic residues. Disordered stretches follow at residues 297-347 (DVTG…PGVE), 374-400 (PQGA…SWEV), and 413-709 (EKGR…YAPA). At Thr311 the chain carries Phosphothreonine. Basic and acidic residues predominate over residues 315-336 (RLQEQFEAETCRKEEGASRDSL). Phosphoserine occurs at positions 332 and 335. Basic and acidic residues-rich tracts occupy residues 413-427 (EKGR…REDG), 435-452 (TQGR…KDSE), 462-484 (DEEK…KGGE), 494-531 (LVTE…ESKT), 540-561 (IGDK…EKTG), 571-582 (EGSKKLLDREAD), 589-607 (EVDK…EQGK), and 630-647 (DEPR…KQEG). Ser451 carries the post-translational modification Phosphoserine. Ser601 carries the post-translational modification Phosphoserine. The residue at position 721 (Ser721) is a Phosphoserine. 2 S-palmitoyl cysteine lipidation sites follow: Cys728 and Cys730. Cys731 is modified (cysteine methyl ester). Cys731 is lipidated: S-farnesyl cysteine. The propeptide at 732–734 (VVM) is removed in mature form.

The protein belongs to the paralemmin family. In terms of assembly, interacts with SIGIRR. Post-translationally, palmitoylated on Cys-728 and Cys-730 and prenylated on Cys-731; which is required for membrane association.

It localises to the cytoplasm. The protein localises to the cell membrane. In terms of biological role, ATP-binding protein, which may act as a adapter in the Toll-like receptor (TLR) signaling. This Mus musculus (Mouse) protein is Paralemmin-3 (Palm3).